The sequence spans 252 residues: ATP synthase subunit a (252 aa).

6 helical membrane-spanning segments follow: residues 29 to 49 (FTNV…FLFI), 87 to 107 (FFPL…IGLF), 116 to 136 (QIMI…GYGF), 146 to 166 (LFVP…IEVI), 183 to 205 (MLAG…ELGI), and 219 to 239 (VAIT…FTVL).

It belongs to the ATPase A chain family. In terms of assembly, F-type ATPases have 2 components, CF(1) - the catalytic core - and CF(0) - the membrane proton channel. CF(1) has five subunits: alpha(3), beta(3), gamma(1), delta(1), epsilon(1). CF(0) has three main subunits: a(1), b(2) and c(9-12). The alpha and beta chains form an alternating ring which encloses part of the gamma chain. CF(1) is attached to CF(0) by a central stalk formed by the gamma and epsilon chains, while a peripheral stalk is formed by the delta and b chains.

Its subcellular location is the cell inner membrane. In terms of biological role, key component of the proton channel; it plays a direct role in the translocation of protons across the membrane. The polypeptide is ATP synthase subunit a (Bartonella quintana (strain Toulouse) (Rochalimaea quintana)).